The chain runs to 143 residues: Large ribosomal subunit protein uL13 (143 aa).

This sequence belongs to the universal ribosomal protein uL13 family. In terms of assembly, part of the 50S ribosomal subunit.

Its function is as follows. This protein is one of the early assembly proteins of the 50S ribosomal subunit, although it is not seen to bind rRNA by itself. It is important during the early stages of 50S assembly. This Symbiobacterium thermophilum (strain DSM 24528 / JCM 14929 / IAM 14863 / T) protein is Large ribosomal subunit protein uL13.